A 431-amino-acid polypeptide reads, in one-letter code: MVKKYKVIDNFISKEALSGILLLFVTLFAIIVANSNFGDFYFNLWDKPLGVAIGDFIISMPLRLWINDGLMALFFLMVSLEIKRELLIGELASVSRAMFPFVASLGGMIVPASIYIALNPDNFIGFGIPMGTDTAFAIAMLILLGKRVNTALKLFLVALAVIDDLGAIIVVATVYTSELKLEYFLHAAFVYGLIWLLNYFDVKKLSFYLFLGIFLWIFIHETGVHATIAGVLLAFAIPISSRMNEKKFIEKTKADLEEFERCMDDKPILNHRQINALEGIAYGYDRVQNPLIRLEHDLHGFSAFFIMPIFAFSNAGVLLDFSTVWTNWMIVLGVALGLLVGKPLGIFGFTYAATKLNIIKKPKNISWFEIISVGFIAGIGFTMSIFIANLAFIDEDTISAIKIGIFTASFMATVIGMILISINYKFKISKA.

11 helical membrane-spanning segments follow: residues 17 to 37 (LSGILLLFVTLFAIIVANSNF), 56 to 76 (FIISMPLRLWINDGLMALFFL), 98 to 118 (MFPFVASLGGMIVPASIYIAL), 123 to 143 (FIGFGIPMGTDTAFAIAMLIL), 154 to 174 (LFLVALAVIDDLGAIIVVATV), 182 to 202 (EYFLHAAFVYGLIWLLNYFDV), 209 to 229 (LFLGIFLWIFIHETGVHATIA), 301 to 321 (FSAFFIMPIFAFSNAGVLLDF), 329 to 349 (MIVLGVALGLLVGKPLGIFGF), 373 to 393 (VGFIAGIGFTMSIFIANLAFI), and 400 to 420 (AIKIGIFTASFMATVIGMILI).

The protein belongs to the NhaA Na(+)/H(+) (TC 2.A.33) antiporter family.

The protein localises to the cell inner membrane. The enzyme catalyses Na(+)(in) + 2 H(+)(out) = Na(+)(out) + 2 H(+)(in). Its function is as follows. Na(+)/H(+) antiporter that extrudes sodium in exchange for external protons. In Aliarcobacter butzleri (strain RM4018) (Arcobacter butzleri), this protein is Na(+)/H(+) antiporter NhaA 1.